The following is a 261-amino-acid chain: Cytochrome c oxidase subunit 3 (261 aa).

The Mitochondrial matrix portion of the chain corresponds to 1 to 15 (MTHQTHAYHMVNPSP). The helical transmembrane segment at 16 to 34 (WPLTGALSALLMTSGLIMW) threads the bilayer. Topologically, residues 35–40 (FHFNSM) are mitochondrial intermembrane. The chain crosses the membrane as a helical span at residues 41–66 (TLLMLGLTTNMLTMYQWWRDIIREST). Topologically, residues 67–72 (FQGHHT) are mitochondrial matrix. Residues 73-105 (SAVQKGLRYGMILFIISEVLFFTGFFWAFYHSS) traverse the membrane as a helical segment. At 106-128 (LAPTPELGGCWPPTGIHPLNPLE) the chain is on the mitochondrial intermembrane side. Residues 129–152 (VPLLNTSVLLASGVSITWAHHSLM) form a helical membrane-spanning segment. At 153-155 (EGN) the chain is on the mitochondrial matrix side. A helical transmembrane segment spans residues 156 to 183 (RNHMLQALFITIALGVYFTLLQASEYYE). The Mitochondrial intermembrane portion of the chain corresponds to 184 to 190 (APFTISD). The helical transmembrane segment at 191–223 (GVYGSTFFVATGFHGLHVIIGSTFLIVCFFRQL) threads the bilayer. Topologically, residues 224 to 232 (KFHFTSTHH) are mitochondrial matrix. The chain crosses the membrane as a helical span at residues 233 to 256 (FGFEAAAWYWHFVDVVWLFLYVSI). Over 257–261 (YWWGS) the chain is Mitochondrial intermembrane.

The protein belongs to the cytochrome c oxidase subunit 3 family. Component of the cytochrome c oxidase (complex IV, CIV), a multisubunit enzyme composed of 14 subunits. The complex is composed of a catalytic core of 3 subunits MT-CO1, MT-CO2 and MT-CO3, encoded in the mitochondrial DNA, and 11 supernumerary subunits COX4I, COX5A, COX5B, COX6A, COX6B, COX6C, COX7A, COX7B, COX7C, COX8 and NDUFA4, which are encoded in the nuclear genome. The complex exists as a monomer or a dimer and forms supercomplexes (SCs) in the inner mitochondrial membrane with NADH-ubiquinone oxidoreductase (complex I, CI) and ubiquinol-cytochrome c oxidoreductase (cytochrome b-c1 complex, complex III, CIII), resulting in different assemblies (supercomplex SCI(1)III(2)IV(1) and megacomplex MCI(2)III(2)IV(2)).

Its subcellular location is the mitochondrion inner membrane. It catalyses the reaction 4 Fe(II)-[cytochrome c] + O2 + 8 H(+)(in) = 4 Fe(III)-[cytochrome c] + 2 H2O + 4 H(+)(out). In terms of biological role, component of the cytochrome c oxidase, the last enzyme in the mitochondrial electron transport chain which drives oxidative phosphorylation. The respiratory chain contains 3 multisubunit complexes succinate dehydrogenase (complex II, CII), ubiquinol-cytochrome c oxidoreductase (cytochrome b-c1 complex, complex III, CIII) and cytochrome c oxidase (complex IV, CIV), that cooperate to transfer electrons derived from NADH and succinate to molecular oxygen, creating an electrochemical gradient over the inner membrane that drives transmembrane transport and the ATP synthase. Cytochrome c oxidase is the component of the respiratory chain that catalyzes the reduction of oxygen to water. Electrons originating from reduced cytochrome c in the intermembrane space (IMS) are transferred via the dinuclear copper A center (CU(A)) of subunit 2 and heme A of subunit 1 to the active site in subunit 1, a binuclear center (BNC) formed by heme A3 and copper B (CU(B)). The BNC reduces molecular oxygen to 2 water molecules using 4 electrons from cytochrome c in the IMS and 4 protons from the mitochondrial matrix. This Damaliscus lunatus (Tsessebe) protein is Cytochrome c oxidase subunit 3 (MT-CO3).